We begin with the raw amino-acid sequence, 260 residues long: Lysine/arginine/ornithine-binding periplasmic protein (260 aa).

A signal peptide spans M1 to A22. Residue D33 coordinates L-arginine. D33 is an L-lysine binding site. D33 lines the L-ornithine pocket. C60 and C67 are joined by a disulfide. S91, S92, S94, R99, T143, and D183 together coordinate L-arginine. Positions 91, 92, 94, 99, 143, and 183 each coordinate L-ornithine. Residues S92, S94, R99, and T143 each coordinate L-lysine.

Belongs to the bacterial solute-binding protein 3 family. The complex is composed of two ATP-binding proteins (HisP), two transmembrane proteins (HisM and HisQ) and a solute-binding protein (ArgT).

The protein resides in the periplasm. Functionally, part of the ABC transporter complex HisPMQ-ArgT involved in lysine/arginine/ornithine transport. Binds lysine, arginine and ornithine. Stimulates ATPase activity of HisP. This Escherichia coli (strain K12) protein is Lysine/arginine/ornithine-binding periplasmic protein (argT).